A 289-amino-acid chain; its full sequence is E3 ubiquitin-protein ligase MARCHF8 (289 aa).

The disordered stretch occupies residues methionine 1–threonine 68. Residues lysine 25–leucine 39 are compositionally biased toward basic and acidic residues. A compositionally biased stretch (low complexity) spans serine 50–serine 64. Residues valine 70 to glutamate 131 form an RING-CH-type zinc finger. Zn(2+) contacts are provided by cysteine 78, cysteine 81, cysteine 95, cysteine 97, histidine 105, cysteine 108, cysteine 121, and cysteine 124. 2 helical membrane-spanning segments follow: residues cysteine 155–isoleucine 175 and phenylalanine 195–valine 215.

In terms of assembly, interacts with CD86.

The protein localises to the golgi apparatus membrane. It is found in the endoplasmic reticulum membrane. It localises to the cytoplasmic vesicle membrane. Its subcellular location is the lysosome membrane. The protein resides in the early endosome membrane. The enzyme catalyses S-ubiquitinyl-[E2 ubiquitin-conjugating enzyme]-L-cysteine + [acceptor protein]-L-lysine = [E2 ubiquitin-conjugating enzyme]-L-cysteine + N(6)-ubiquitinyl-[acceptor protein]-L-lysine.. Its pathway is protein modification; protein ubiquitination. Functionally, E3 ubiquitin-protein ligase that plays several important roles in innate immunity and adaptive immunity. Mediates ubiquitination of CD86 and MHC class II proteins, such as HLA-DR alpha and beta, and promotes their subsequent endocytosis and sorting to lysosomes via multivesicular bodies. Possesses a very broad antiviral activity by specifically inactivating different viral fusion proteins. Targets and ubiquitinates cytoplasmic lysine residues of viral envelope glycoproteins with single transmembrane domains leading to their lysosomal degradation. Mediates the regulation of constitutive ubiquitination and trafficking of the viral restriction factor BST2 within the endocytic pathway. Plays a role in maintenance of immune tolerance to self by promoting the turnover and proteasomal degradation of PD-L1/CD274 via ubiquitination. Catalyzes the 'Lys-63'-linked polyubiquitylation of cGAS thereby inhibiting its DNA binding ability and impairing its antiviral innate immunity. Negatively regulates IL7-mediated T-cell homeostasis by mediating 'Lys-27'-linked polyubiquitination of IL7R, leading to its lysosomal degradation. This is E3 ubiquitin-protein ligase MARCHF8 (MARCHF8) from Bos taurus (Bovine).